Here is a 312-residue protein sequence, read N- to C-terminus: tRNA-cytidine(32) 2-sulfurtransferase (312 aa).

Positions 47-52 (SGGKDS) match the PP-loop motif motif. [4Fe-4S] cluster-binding residues include cysteine 122, cysteine 125, and cysteine 213.

Belongs to the TtcA family. As to quaternary structure, homodimer. The cofactor is Mg(2+). [4Fe-4S] cluster serves as cofactor.

The protein resides in the cytoplasm. The enzyme catalyses cytidine(32) in tRNA + S-sulfanyl-L-cysteinyl-[cysteine desulfurase] + AH2 + ATP = 2-thiocytidine(32) in tRNA + L-cysteinyl-[cysteine desulfurase] + A + AMP + diphosphate + H(+). The protein operates within tRNA modification. In terms of biological role, catalyzes the ATP-dependent 2-thiolation of cytidine in position 32 of tRNA, to form 2-thiocytidine (s(2)C32). The sulfur atoms are provided by the cysteine/cysteine desulfurase (IscS) system. This is tRNA-cytidine(32) 2-sulfurtransferase from Actinobacillus succinogenes (strain ATCC 55618 / DSM 22257 / CCUG 43843 / 130Z).